The chain runs to 147 residues: Sec-independent protein translocase protein TatB (147 aa).

The helical transmembrane segment at M1–G21 threads the bilayer. The tract at residues A117–A147 is disordered.

This sequence belongs to the TatB family. As to quaternary structure, the Tat system comprises two distinct complexes: a TatABC complex, containing multiple copies of TatA, TatB and TatC subunits, and a separate TatA complex, containing only TatA subunits. Substrates initially bind to the TatABC complex, which probably triggers association of the separate TatA complex to form the active translocon.

It localises to the cell inner membrane. Functionally, part of the twin-arginine translocation (Tat) system that transports large folded proteins containing a characteristic twin-arginine motif in their signal peptide across membranes. Together with TatC, TatB is part of a receptor directly interacting with Tat signal peptides. TatB may form an oligomeric binding site that transiently accommodates folded Tat precursor proteins before their translocation. This Aromatoleum aromaticum (strain DSM 19018 / LMG 30748 / EbN1) (Azoarcus sp. (strain EbN1)) protein is Sec-independent protein translocase protein TatB.